Reading from the N-terminus, the 940-residue chain is Isoleucine--tRNA ligase (940 aa).

The short motif at 58 to 68 (PYANGAIHIGH) is the 'HIGH' region element. Glu-564 lines the L-isoleucyl-5'-AMP pocket. The 'KMSKS' region motif lies at 605–609 (KMSKS). Residue Lys-608 participates in ATP binding. The Zn(2+) site is built by Cys-903, Cys-906, Cys-923, and Cys-926.

Belongs to the class-I aminoacyl-tRNA synthetase family. IleS type 1 subfamily. In terms of assembly, monomer. The cofactor is Zn(2+).

The protein localises to the cytoplasm. It carries out the reaction tRNA(Ile) + L-isoleucine + ATP = L-isoleucyl-tRNA(Ile) + AMP + diphosphate. In terms of biological role, catalyzes the attachment of isoleucine to tRNA(Ile). As IleRS can inadvertently accommodate and process structurally similar amino acids such as valine, to avoid such errors it has two additional distinct tRNA(Ile)-dependent editing activities. One activity is designated as 'pretransfer' editing and involves the hydrolysis of activated Val-AMP. The other activity is designated 'posttransfer' editing and involves deacylation of mischarged Val-tRNA(Ile). The sequence is that of Isoleucine--tRNA ligase from Nitrosococcus oceani (strain ATCC 19707 / BCRC 17464 / JCM 30415 / NCIMB 11848 / C-107).